The following is a 776-amino-acid chain: Protein translocase subunit SecA 2 (776 aa).

Residues Gln80, 98–102, and Asp486 contribute to the ATP site; that span reads GEGKT.

This sequence belongs to the SecA family. Monomer and homodimer. Part of the essential Sec protein translocation apparatus which comprises SecA, SecYEG and auxiliary proteins SecDF. Other proteins may also be involved.

It localises to the cell membrane. The protein localises to the cytoplasm. It catalyses the reaction ATP + H2O + cellular proteinSide 1 = ADP + phosphate + cellular proteinSide 2.. Functionally, part of the Sec protein translocase complex. Interacts with the SecYEG preprotein conducting channel. Has a central role in coupling the hydrolysis of ATP to the transfer of proteins into and across the cell membrane, serving as an ATP-driven molecular motor driving the stepwise translocation of polypeptide chains across the membrane. The polypeptide is Protein translocase subunit SecA 2 (Listeria monocytogenes serotype 4b (strain F2365)).